Consider the following 775-residue polypeptide: Probable ubiquitin carboxyl-terminal hydrolase creB (775 aa).

Residues 1-45 (MGSFLRSFRHNGGSTAPSVGAVPAKKEPQPPPMTPLEKRLLDMGP) form a disordered region. The segment covering 36 to 45 (LEKRLLDMGP) has biased composition (basic and acidic residues). Positions 55 to 468 (YGMENYGNTC…CAYVLFYQET (414 aa)) constitute a USP domain. Cys-64 acts as the Nucleophile in catalysis. 2 disordered regions span residues 113 to 146 (EAEA…DSPE) and 238 to 269 (ASKQ…KTPN). A compositionally biased stretch (polar residues) spans 256–269 (SVDQSSSTGSKTPN). The Proton acceptor role is filled by His-419. Positions 496-775 (LKQNGFPQSP…LRKKSFSILS (280 aa)) are disordered. Low complexity-rich tracts occupy residues 546-566 (ESAP…SPLS) and 576-585 (ERVTTVATPP). Residues 586 to 653 (KNDALAKKER…ASKAEEDRRL (68 aa)) adopt a coiled-coil conformation. The span at 589 to 662 (ALAKKERARE…LSHENGKEKQ (74 aa)) shows a compositional bias: basic and acidic residues. A compositionally biased stretch (basic residues) spans 668–679 (RLKRGSKSLSHR). Low complexity predominate over residues 705–725 (SQTGPTSEQQQQQQQQQSPPN). Over residues 739–757 (TIREDEQVNHKDSKHERTG) the composition is skewed to basic and acidic residues. Residues 758 to 775 (HGKWRSFSLRKKSFSILS) are compositionally biased toward basic residues.

It belongs to the peptidase C19 family. Interacts with creA, creC and qutD.

It catalyses the reaction Thiol-dependent hydrolysis of ester, thioester, amide, peptide and isopeptide bonds formed by the C-terminal Gly of ubiquitin (a 76-residue protein attached to proteins as an intracellular targeting signal).. Ubiquitin thioesterase component of the regulatory network controlling carbon source utilization through ubiquitination and deubiquitination involving creA, creB, creC, creD and acrB. Deubiquitinates the creA catabolic repressor and the quinate permease qutD. Also plays a role in response to carbon starvation and the control of extracellular proteases activity. The protein is Probable ubiquitin carboxyl-terminal hydrolase creB (creB) of Aspergillus fumigatus (strain ATCC MYA-4609 / CBS 101355 / FGSC A1100 / Af293) (Neosartorya fumigata).